Reading from the N-terminus, the 131-residue chain is Phosphoribosyl-ATP pyrophosphatase 2 (131 aa).

The tract at residues 105 to 131 (RIGKPAAPHATRRPVIPQEARAVRKHR) is disordered.

It belongs to the PRA-PH family.

It localises to the cytoplasm. The enzyme catalyses 1-(5-phospho-beta-D-ribosyl)-ATP + H2O = 1-(5-phospho-beta-D-ribosyl)-5'-AMP + diphosphate + H(+). It participates in amino-acid biosynthesis; L-histidine biosynthesis; L-histidine from 5-phospho-alpha-D-ribose 1-diphosphate: step 2/9. The chain is Phosphoribosyl-ATP pyrophosphatase 2 (hisE2) from Rhodopseudomonas palustris (strain ATCC BAA-98 / CGA009).